Reading from the N-terminus, the 838-residue chain is Outer membrane usher protein YraJ (838 aa).

The N-terminal stretch at 1–40 is a signal peptide; the sequence is MPQRHHQGHKRTPKQLALIIKRCLPMVLTGSGMLCTTANA. A disulfide bond links Cys-815 and Cys-837.

This sequence belongs to the fimbrial export usher family.

It is found in the cell outer membrane. Its function is as follows. Part of the yraHIJK fimbrial operon. Could contribute to adhesion to various surfaces in specific environmental niches. Increases adhesion to eukaryotic T24 bladder epithelial cells in the absence of fim operon. Probably involved in the export and assembly of fimbrial subunits across the outer membrane. The sequence is that of Outer membrane usher protein YraJ (yraJ) from Escherichia coli (strain K12).